A 66-amino-acid polypeptide reads, in one-letter code: Large ribosomal subunit protein uL29 (66 aa).

It belongs to the universal ribosomal protein uL29 family.

The chain is Large ribosomal subunit protein uL29 from Helicobacter pylori (strain HPAG1).